A 209-amino-acid chain; its full sequence is Uracil phosphoribosyltransferase (209 aa).

5-phospho-alpha-D-ribose 1-diphosphate is bound by residues Arg-79, Arg-104, and Asp-131–Ser-139. Uracil-binding positions include Ile-194 and Gly-199–Ala-201. Asp-200 is a binding site for 5-phospho-alpha-D-ribose 1-diphosphate.

It belongs to the UPRTase family. Mg(2+) is required as a cofactor.

The enzyme catalyses UMP + diphosphate = 5-phospho-alpha-D-ribose 1-diphosphate + uracil. It functions in the pathway pyrimidine metabolism; UMP biosynthesis via salvage pathway; UMP from uracil: step 1/1. Its activity is regulated as follows. Allosterically activated by GTP. Its function is as follows. Catalyzes the conversion of uracil and 5-phospho-alpha-D-ribose 1-diphosphate (PRPP) to UMP and diphosphate. The protein is Uracil phosphoribosyltransferase of Enterococcus faecalis (strain ATCC 700802 / V583).